Reading from the N-terminus, the 181-residue chain is Endoribonuclease YbeY (181 aa).

The Zn(2+) site is built by His-115, His-119, and His-125.

It belongs to the endoribonuclease YbeY family. Zn(2+) is required as a cofactor.

The protein localises to the cytoplasm. Its function is as follows. Single strand-specific metallo-endoribonuclease involved in late-stage 70S ribosome quality control and in maturation of the 3' terminus of the 16S rRNA. This Bifidobacterium adolescentis (strain ATCC 15703 / DSM 20083 / NCTC 11814 / E194a) protein is Endoribonuclease YbeY.